A 409-amino-acid chain; its full sequence is SPI-1 type 3 secretion system translocon protein SctB (409 aa).

A helical membrane pass occupies residues 119 to 140 (ISGMSSSAVALLAAANTLMLTL). Over residues 350-368 (ERSEQQISQVNNRVASTAS) the composition is skewed to polar residues. The tract at residues 350–378 (ERSEQQISQVNNRVASTASDEARESSRKS) is disordered.

This sequence belongs to the SctB/SipC family. In terms of assembly, the core secretion machinery of the T3SS is composed of approximately 20 different proteins, including cytoplasmic components, a base, an export apparatus and a needle. This subunit is involved in the formation of a pore, called the translocon, in host membrane.

The protein localises to the secreted. Its subcellular location is the host membrane. Component of the type III secretion system 1 (SPI-1 T3SS), also called injectisome, which is used to inject bacterial effector proteins into eukaryotic host cells. SipB/SctE1 and SipC/SctB1 are inserted into the host membrane where they form a pore and allow the translocation of effector proteins into the cytosol of target cells. The sequence is that of SPI-1 type 3 secretion system translocon protein SctB from Salmonella typhi.